The primary structure comprises 90 residues: uncharacterized protein (90 aa).

It localises to the cytoplasm. This is an uncharacterized protein from Saccharomyces cerevisiae (strain ATCC 204508 / S288c) (Baker's yeast).